The chain runs to 459 residues: MAPPTKRTRVEMAESSNKRMKPSETVPEDVLELMMSTYLPVQSLLTTRVLSKRFRETEVRSLDLDFSGIYSRRRRKVEVVGIIEKVFNQHKGSEIHRFVLLLNHIGVEDKIISWTNTCFDKNIKELVLDFSKSRKVMAIPIDFSAVESLQVLKLRWCKFEIPDSSPKGLKLLKTLSLMRTQVMVKTIDAIFNNCIHLESLELIECRMDGILSIRAQNHKKFKSLVVSFMPDLRHIRLDAPTLENYKYDGYVICVNILITNALKEANLYYTRIRRLYHQKSDLVDTLRFYTRLTVLATTTIFLEALTKRYVGEGRLENPPFKFENLTEFKISFITPTFCTLFDIAEFLKECPKLKQVVIDIQNFTFEPQMYFWEIHHKAQIQNTSNNNYLLKCLTDVKIIGYKGHWHELDIVEFFVKNAPSLKRLELQMPKNAKNDAHTPDVARIKLIKTIFSGVKVTEV.

The disordered stretch occupies residues 1-25; the sequence is MAPPTKRTRVEMAESSNKRMKPSET. The F-box domain occupies 21–69; sequence KPSETVPEDVLELMMSTYLPVQSLLTTRVLSKRFRETEVRSLDLDFSGI. Positions 396–428 constitute an FBD domain; it reads VKIIGYKGHWHELDIVEFFVKNAPSLKRLELQM.

This is FBD-associated F-box protein At1g61320 from Arabidopsis thaliana (Mouse-ear cress).